A 540-amino-acid polypeptide reads, in one-letter code: Glucose-6-phosphate isomerase (540 aa).

Catalysis depends on glutamate 350, which acts as the Proton donor. Active-site residues include histidine 381 and lysine 503.

It belongs to the GPI family.

Its subcellular location is the cytoplasm. It carries out the reaction alpha-D-glucose 6-phosphate = beta-D-fructose 6-phosphate. It functions in the pathway carbohydrate biosynthesis; gluconeogenesis. The protein operates within carbohydrate degradation; glycolysis; D-glyceraldehyde 3-phosphate and glycerone phosphate from D-glucose: step 2/4. Functionally, catalyzes the reversible isomerization of glucose-6-phosphate to fructose-6-phosphate. In Burkholderia pseudomallei (strain 1710b), this protein is Glucose-6-phosphate isomerase.